We begin with the raw amino-acid sequence, 186 residues long: Dirigent protein 7 (186 aa).

Residues 1–21 (MAKLILIIVTQILLIAAVVSA) form the signal peptide. Residues asparagine 70, asparagine 91, and asparagine 126 are each glycosylated (N-linked (GlcNAc...) asparagine).

The protein belongs to the plant dirigent protein family. As to quaternary structure, homodimer.

It is found in the secreted. It localises to the extracellular space. The protein localises to the apoplast. Dirigent proteins impart stereoselectivity on the phenoxy radical-coupling reaction, yielding optically active lignans from two molecules of coniferyl alcohol in the biosynthesis of lignans, flavonolignans, and alkaloids and thus plays a central role in plant secondary metabolism. The polypeptide is Dirigent protein 7 (DIR7) (Arabidopsis thaliana (Mouse-ear cress)).